A 509-amino-acid chain; its full sequence is ESX-2 secretion system protein eccD2 (509 aa).

The next 11 membrane-spanning stretches (helical) occupy residues 135–155 (LTAAHTAMAIIAMAVGVVLAL), 170–190 (AMAGGIGVLLVIGALVVWWGW), 196–216 (LFSGFGWLAVVLLAVAAACAP), 222–242 (AAHALIGLVVVVLGAITIGVA), 248–268 (QTAVVTAVVTVCGILAAVAAV), 281–301 (ICVLVGLLVLIRMTPTVALWV), 364–384 (VQVGMCVGVSLVLPAAVWGVL), 389–409 (PWAWLALLVAGLTVGLFITQG), 418–438 (AVALVCGASAAVCAGVLKYAL), 449–469 (LWPAIFVAAFAALGLAVALVV), and 487–507 (VLAMIALLPAAAALGGLFAWL).

The protein belongs to the EccD/Snm4 family. Part of the ESX-2 / type VII secretion system (T7SS), which is composed of cytosolic and membrane components.

The protein localises to the cell membrane. This Mycobacterium tuberculosis (strain CDC 1551 / Oshkosh) protein is ESX-2 secretion system protein eccD2 (eccD2).